The primary structure comprises 241 residues: Ubiquinone biosynthesis O-methyltransferase (241 aa).

S-adenosyl-L-methionine contacts are provided by arginine 46, glycine 66, aspartate 87, and methionine 131.

Belongs to the methyltransferase superfamily. UbiG/COQ3 family.

The catalysed reaction is a 3-demethylubiquinol + S-adenosyl-L-methionine = a ubiquinol + S-adenosyl-L-homocysteine + H(+). It catalyses the reaction a 3-(all-trans-polyprenyl)benzene-1,2-diol + S-adenosyl-L-methionine = a 2-methoxy-6-(all-trans-polyprenyl)phenol + S-adenosyl-L-homocysteine + H(+). The protein operates within cofactor biosynthesis; ubiquinone biosynthesis. Functionally, O-methyltransferase that catalyzes the 2 O-methylation steps in the ubiquinone biosynthetic pathway. The polypeptide is Ubiquinone biosynthesis O-methyltransferase (Bordetella parapertussis (strain 12822 / ATCC BAA-587 / NCTC 13253)).